Reading from the N-terminus, the 180-residue chain is Putative phycocyanobilin lyase CpcS 2 (180 aa).

It belongs to the CpcS/CpeS biliprotein lyase family.

Covalently attaches a chromophore to Cys residue(s) of phycobiliproteins (Potential). In vitro does not act as a chromophore lyase for ApcA1, ApcA2, ApcB, ApcD, ApcF, CpcB or PecB, the lyase activity is therefore unsure. This Nostoc sp. (strain PCC 7120 / SAG 25.82 / UTEX 2576) protein is Putative phycocyanobilin lyase CpcS 2 (cpeS2).